Consider the following 333-residue polypeptide: D-lactate dehydrogenase (333 aa).

NAD(+)-binding positions include 156-157 (HI), D176, 207-208 (VP), N213, 234-236 (VSR), and D260. R236 is a catalytic residue. E265 is a catalytic residue. Catalysis depends on H297, which acts as the Proton donor.

Belongs to the D-isomer specific 2-hydroxyacid dehydrogenase family. As to quaternary structure, homodimer.

The enzyme catalyses (R)-lactate + NAD(+) = pyruvate + NADH + H(+). The chain is D-lactate dehydrogenase (ldhA) from Lactobacillus delbrueckii subsp. bulgaricus (strain ATCC 11842 / DSM 20081 / BCRC 10696 / JCM 1002 / NBRC 13953 / NCIMB 11778 / NCTC 12712 / WDCM 00102 / Lb 14).